The sequence spans 188 residues: Segregation and condensation protein B (188 aa).

Belongs to the ScpB family. As to quaternary structure, homodimer. Homodimerization may be required to stabilize the binding of ScpA to the Smc head domains. Component of a cohesin-like complex composed of ScpA, ScpB and the Smc homodimer, in which ScpA and ScpB bind to the head domain of Smc. The presence of the three proteins is required for the association of the complex with DNA.

Its subcellular location is the cytoplasm. Participates in chromosomal partition during cell division. May act via the formation of a condensin-like complex containing Smc and ScpA that pull DNA away from mid-cell into both cell halves. This chain is Segregation and condensation protein B, found in Streptococcus gordonii (strain Challis / ATCC 35105 / BCRC 15272 / CH1 / DL1 / V288).